We begin with the raw amino-acid sequence, 79 residues long: Acyl carrier protein (79 aa).

Residues 2 to 77 enclose the Carrier domain; it reads ESIEQRVKKI…QAIDYINSHG (76 aa). An O-(pantetheine 4'-phosphoryl)serine modification is found at S37.

It belongs to the acyl carrier protein (ACP) family. In terms of processing, 4'-phosphopantetheine is transferred from CoA to a specific serine of apo-ACP by AcpS. This modification is essential for activity because fatty acids are bound in thioester linkage to the sulfhydryl of the prosthetic group.

Its subcellular location is the cytoplasm. It functions in the pathway lipid metabolism; fatty acid biosynthesis. In terms of biological role, carrier of the growing fatty acid chain in fatty acid biosynthesis. This is Acyl carrier protein from Bordetella avium (strain 197N).